The following is a 212-amino-acid chain: Thymidylate kinase (212 aa).

7 to 14 contacts ATP; sequence GIEGCGKS.

Belongs to the thymidylate kinase family.

The catalysed reaction is dTMP + ATP = dTDP + ADP. In terms of biological role, phosphorylation of dTMP to form dTDP in both de novo and salvage pathways of dTTP synthesis. This Trichlorobacter lovleyi (strain ATCC BAA-1151 / DSM 17278 / SZ) (Geobacter lovleyi) protein is Thymidylate kinase.